The sequence spans 477 residues: MTQFESSRATVHIVGAGLAGSEAAWQVAAQGVRVVLHEMRPHRMTAAHRTGGLAELVCSNSFRSDDASNNAVGLLHAEMRRLGSLVMRCADANQVPAGGALAVDRDGFSAAVTEALDNHPLIEIDRAEIDGLPPADWGNVIVATGPLTSTPLAAAIRALTDESALAFFDAIAPIVHRDSIDMSKAWFQSRYDKAGPGGSGADYINCPLSEAQYHAFVDALLEGEKVDFKDWETAPPYFDGCLPIEVMAERGRETLRYGPMKPVGLTNPHDPATKPYAVVQLRQDNKLGTLYNIVGFQTKLKHGAQTRIFRTIPGLEGAEFARLGGLHRNTFLNSPKLLDVRLRLRAEPRLRFAGQMTGCEGYVESAAIGLLGGLYAAADARSCTLEAPPQTTALGALLGHITGGHIETIDTGPRSFQPMNINFGLFPPLADPPTRKPDGTRLRGNEKTIAKKQAICARALSDLDRWIADALRPAAAA.

15-20 (GAGLAG) provides a ligand contact to FAD.

This sequence belongs to the MnmG family. TrmFO subfamily. The cofactor is FAD.

It localises to the cytoplasm. The enzyme catalyses uridine(54) in tRNA + (6R)-5,10-methylene-5,6,7,8-tetrahydrofolate + NADH + H(+) = 5-methyluridine(54) in tRNA + (6S)-5,6,7,8-tetrahydrofolate + NAD(+). It catalyses the reaction uridine(54) in tRNA + (6R)-5,10-methylene-5,6,7,8-tetrahydrofolate + NADPH + H(+) = 5-methyluridine(54) in tRNA + (6S)-5,6,7,8-tetrahydrofolate + NADP(+). Catalyzes the folate-dependent formation of 5-methyl-uridine at position 54 (M-5-U54) in all tRNAs. The sequence is that of Methylenetetrahydrofolate--tRNA-(uracil-5-)-methyltransferase TrmFO from Nitrobacter winogradskyi (strain ATCC 25391 / DSM 10237 / CIP 104748 / NCIMB 11846 / Nb-255).